A 253-amino-acid chain; its full sequence is MAKAAVTKRHHFMIQKLLILLSYGYTNGLDDAHSLRCNLTIKAPTPADPLWYEAKCLVDEILILHLSNINKTMTSGDPGETANATEVGECLTQPVNDLCQKLRDKVSNTKVDTHKTNGYPHLQVTMIYPQSQGQTPSATWEFNISDSYFFTFYTENMSWRSANDESGVIMNKWNDDGDLVQRLKYFIPECRQKIDEFLKQSKEKPRSTSRSPSITQLTSTSPLPPPSHSTSKKGFISVGLIFISLLFAFAFAM.

The first 28 residues, M1–G28, serve as a signal peptide directing secretion. A disulfide bridge links C37 with C56. N-linked (GlcNAc...) asparagine glycans are attached at residues N38, N70, N83, N143, and N156. A disulfide bridge connects residues C90 and C190. The segment at L198–T230 is disordered. A compositionally biased stretch (low complexity) spans S211–S221. S227 is lipidated: GPI-anchor amidated serine. Residues H228–M253 constitute a propeptide, removed in mature form.

This sequence belongs to the NKG2D ligand family. Glycosylated. In terms of tissue distribution, expressed predominantly in embryonic brain.

Its subcellular location is the cell membrane. Acts as a ligand for KLRK1. The chain is Retinoic acid early-inducible protein 1-gamma (Raet1c) from Mus musculus (Mouse).